The primary structure comprises 510 residues: D-alanine--D-alanyl carrier protein ligase (510 aa).

Residue 157–158 (TS) participates in ATP binding. Residue Asp202 coordinates D-alanine. 297–302 (NTYGPT) is a binding site for ATP. Val306 is a D-alanine binding site. 2 residues coordinate ATP: Asp389 and Lys498. Lys498 lines the D-alanine pocket.

This sequence belongs to the ATP-dependent AMP-binding enzyme family. DltA subfamily.

It is found in the cytoplasm. It catalyses the reaction holo-[D-alanyl-carrier protein] + D-alanine + ATP = D-alanyl-[D-alanyl-carrier protein] + AMP + diphosphate. It functions in the pathway cell wall biogenesis; lipoteichoic acid biosynthesis. Its function is as follows. Catalyzes the first step in the D-alanylation of lipoteichoic acid (LTA), the activation of D-alanine and its transfer onto the D-alanyl carrier protein (Dcp) DltC. In an ATP-dependent two-step reaction, forms a high energy D-alanyl-AMP intermediate, followed by transfer of the D-alanyl residue as a thiol ester to the phosphopantheinyl prosthetic group of the Dcp. D-alanylation of LTA plays an important role in modulating the properties of the cell wall in Gram-positive bacteria, influencing the net charge of the cell wall. The polypeptide is D-alanine--D-alanyl carrier protein ligase (Listeria innocua serovar 6a (strain ATCC BAA-680 / CLIP 11262)).